We begin with the raw amino-acid sequence, 140 residues long: Putative pre-16S rRNA nuclease (140 aa).

This sequence belongs to the YqgF nuclease family.

The protein localises to the cytoplasm. Functionally, could be a nuclease involved in processing of the 5'-end of pre-16S rRNA. The sequence is that of Putative pre-16S rRNA nuclease from Pasteurella multocida (strain Pm70).